A 432-amino-acid polypeptide reads, in one-letter code: Acyl-coenzyme A thioesterase 3 (432 aa).

Active-site charge relay system residues include serine 243, aspartate 337, and histidine 371. Residues 430–432 (AKL) carry the Microbody targeting signal motif.

The protein belongs to the C/M/P thioester hydrolase family. As to expression, widely expressed. Highly expressed in the kidney, expressed at low level in the liver. Isoform 2 is expressed in the kidney, but not in the liver. Isoform 1 is liver-specific. Highly expressed in kidney (at protein level).

The protein localises to the peroxisome. It catalyses the reaction hexadecanoyl-CoA + H2O = hexadecanoate + CoA + H(+). It carries out the reaction decanoyl-CoA + H2O = decanoate + CoA + H(+). The catalysed reaction is dodecanoyl-CoA + H2O = dodecanoate + CoA + H(+). The enzyme catalyses tetradecanoyl-CoA + H2O = tetradecanoate + CoA + H(+). It catalyses the reaction octadecanoyl-CoA + H2O = octadecanoate + CoA + H(+). It carries out the reaction eicosanoyl-CoA + H2O = eicosanoate + CoA + H(+). The catalysed reaction is (9Z)-octadecenoyl-CoA + H2O = (9Z)-octadecenoate + CoA + H(+). The enzyme catalyses (9Z,12Z)-octadecadienoyl-CoA + H2O = (9Z,12Z)-octadecadienoate + CoA + H(+). It catalyses the reaction (5Z,8Z,11Z,14Z)-eicosatetraenoyl-CoA + H2O = (5Z,8Z,11Z,14Z)-eicosatetraenoate + CoA + H(+). It carries out the reaction tetracosanoyl-CoA + H2O = tetracosanoate + CoA + H(+). The catalysed reaction is hexacosanoyl-CoA + H2O = hexacosanoate + CoA + H(+). The enzyme catalyses docosanoyl-CoA + H2O = docosanoate + CoA + H(+). It catalyses the reaction (9Z)-hexadecenoyl-CoA + H2O = (9Z)-hexadecenoate + CoA + H(+). The protein operates within lipid metabolism; fatty acid metabolism. Catalyzes the hydrolysis of acyl-CoAs into free fatty acids and coenzyme A (CoASH), regulating their respective intracellular levels. Mainly active on long-chain acyl-CoAs. May have a function in termination of beta-oxidation of fatty acids. This Mus musculus (Mouse) protein is Acyl-coenzyme A thioesterase 3 (Acot3).